We begin with the raw amino-acid sequence, 141 residues long: Large ribosomal subunit protein uL11c (141 aa).

This sequence belongs to the universal ribosomal protein uL11 family. Part of the ribosomal stalk of the 50S ribosomal subunit. Interacts with L10 and the large rRNA to form the base of the stalk. L10 forms an elongated spine to which L12 dimers bind in a sequential fashion forming a multimeric L10(L12)X complex.

It localises to the plastid. The protein localises to the chloroplast. Functionally, forms part of the ribosomal stalk which helps the ribosome interact with GTP-bound translation factors. The polypeptide is Large ribosomal subunit protein uL11c (Thalassiosira pseudonana (Marine diatom)).